The following is a 315-amino-acid chain: Glycine--tRNA ligase alpha subunit (315 aa).

It belongs to the class-II aminoacyl-tRNA synthetase family. As to quaternary structure, tetramer of two alpha and two beta subunits.

It is found in the cytoplasm. It catalyses the reaction tRNA(Gly) + glycine + ATP = glycyl-tRNA(Gly) + AMP + diphosphate. The polypeptide is Glycine--tRNA ligase alpha subunit (Pseudomonas aeruginosa (strain LESB58)).